Consider the following 236-residue polypeptide: ATP synthase subunit a (236 aa).

5 consecutive transmembrane segments (helical) span residues leucine 17–alanine 37, phenylalanine 75–proline 95, aspartate 112–valine 132, isoleucine 174–leucine 194, and phenylalanine 208–methionine 228.

This sequence belongs to the ATPase A chain family. As to quaternary structure, F-type ATPases have 2 components, CF(1) - the catalytic core - and CF(0) - the membrane proton channel. CF(1) has five subunits: alpha(3), beta(3), gamma(1), delta(1), epsilon(1). CF(0) has three main subunits: a(1), b(2) and c(9-12). The alpha and beta chains form an alternating ring which encloses part of the gamma chain. CF(1) is attached to CF(0) by a central stalk formed by the gamma and epsilon chains, while a peripheral stalk is formed by the delta and b chains.

The protein resides in the cell membrane. In terms of biological role, key component of the proton channel; it plays a direct role in the translocation of protons across the membrane. The polypeptide is ATP synthase subunit a (Geobacillus stearothermophilus (Bacillus stearothermophilus)).